The sequence spans 256 residues: Pimeloyl-[acyl-carrier protein] methyl ester esterase (256 aa).

An AB hydrolase-1 domain is found at 15–242 (HLVLLHGWGL…AAHAPFISHP (228 aa)). Substrate is bound by residues tryptophan 22, 82–83 (SL), and 143–147 (FLALQ). Serine 82 acts as the Nucleophile in catalysis. Active-site residues include aspartate 207 and histidine 235. Histidine 235 serves as a coordination point for substrate.

The protein belongs to the AB hydrolase superfamily. Carboxylesterase BioH family. Monomer.

The protein resides in the cytoplasm. It catalyses the reaction 6-carboxyhexanoyl-[ACP] methyl ester + H2O = 6-carboxyhexanoyl-[ACP] + methanol + H(+). The protein operates within cofactor biosynthesis; biotin biosynthesis. Functionally, the physiological role of BioH is to remove the methyl group introduced by BioC when the pimeloyl moiety is complete. It allows to synthesize pimeloyl-ACP via the fatty acid synthetic pathway through the hydrolysis of the ester bonds of pimeloyl-ACP esters. This is Pimeloyl-[acyl-carrier protein] methyl ester esterase from Escherichia coli O45:K1 (strain S88 / ExPEC).